A 118-amino-acid chain; its full sequence is MENATLLKSTTRHIRIFAAEIDRDGELVPSNQVLTLDIDPDNEFNWNEDALQKIYRKFDELVEASSGADLTDYNLRRIGSDLEHYLRSLLQKGEISYNLSARVTNYSLGLPQVAVEDK.

This sequence belongs to the complex I NdhM subunit family. NDH-1 can be composed of about 15 different subunits; different subcomplexes with different compositions have been identified which probably have different functions.

The protein localises to the cellular thylakoid membrane. It carries out the reaction a plastoquinone + NADH + (n+1) H(+)(in) = a plastoquinol + NAD(+) + n H(+)(out). It catalyses the reaction a plastoquinone + NADPH + (n+1) H(+)(in) = a plastoquinol + NADP(+) + n H(+)(out). Its function is as follows. NDH-1 shuttles electrons from an unknown electron donor, via FMN and iron-sulfur (Fe-S) centers, to quinones in the respiratory and/or the photosynthetic chain. The immediate electron acceptor for the enzyme in this species is believed to be plastoquinone. Couples the redox reaction to proton translocation, and thus conserves the redox energy in a proton gradient. Cyanobacterial NDH-1 also plays a role in inorganic carbon-concentration. In Trichormus variabilis (strain ATCC 29413 / PCC 7937) (Anabaena variabilis), this protein is NAD(P)H-quinone oxidoreductase subunit M.